Reading from the N-terminus, the 334-residue chain is N-acetyl-gamma-glutamyl-phosphate reductase (334 aa).

C154 is a catalytic residue.

The protein belongs to the NAGSA dehydrogenase family. Type 1 subfamily.

The protein localises to the cytoplasm. It carries out the reaction N-acetyl-L-glutamate 5-semialdehyde + phosphate + NADP(+) = N-acetyl-L-glutamyl 5-phosphate + NADPH + H(+). It functions in the pathway amino-acid biosynthesis; L-arginine biosynthesis; N(2)-acetyl-L-ornithine from L-glutamate: step 3/4. Functionally, catalyzes the NADPH-dependent reduction of N-acetyl-5-glutamyl phosphate to yield N-acetyl-L-glutamate 5-semialdehyde. The sequence is that of N-acetyl-gamma-glutamyl-phosphate reductase from Escherichia coli O157:H7.